The sequence spans 301 residues: Phosphatidylglycerol--prolipoprotein diacylglyceryl transferase (301 aa).

Helical transmembrane passes span 17–37, 59–79, 97–117, 129–149, 203–223, 230–250, and 257–277; these read LAVR…IVVG, MLFY…VLFY, GGMS…LFAW, FVAP…FING, PSQL…LWLF, VGAA…TVEF, and FLGL…PMII. Arg142 is a binding site for a 1,2-diacyl-sn-glycero-3-phospho-(1'-sn-glycerol).

Belongs to the Lgt family.

Its subcellular location is the cell inner membrane. It catalyses the reaction L-cysteinyl-[prolipoprotein] + a 1,2-diacyl-sn-glycero-3-phospho-(1'-sn-glycerol) = an S-1,2-diacyl-sn-glyceryl-L-cysteinyl-[prolipoprotein] + sn-glycerol 1-phosphate + H(+). Its pathway is protein modification; lipoprotein biosynthesis (diacylglyceryl transfer). Functionally, catalyzes the transfer of the diacylglyceryl group from phosphatidylglycerol to the sulfhydryl group of the N-terminal cysteine of a prolipoprotein, the first step in the formation of mature lipoproteins. The chain is Phosphatidylglycerol--prolipoprotein diacylglyceryl transferase from Paraburkholderia phymatum (strain DSM 17167 / CIP 108236 / LMG 21445 / STM815) (Burkholderia phymatum).